The sequence spans 37 residues: Large ribosomal subunit protein bL36c (37 aa).

It belongs to the bacterial ribosomal protein bL36 family.

It localises to the plastid. Its subcellular location is the chloroplast. This chain is Large ribosomal subunit protein bL36c, found in Lolium perenne (Perennial ryegrass).